Here is a 280-residue protein sequence, read N- to C-terminus: Ribosomal RNA large subunit methyltransferase J (280 aa).

S-adenosyl-L-methionine contacts are provided by residues His-19, His-42, Ser-100, Glu-118, 143 to 144, and Asp-164; that span reads DG. The active-site Proton acceptor is Asp-164.

Belongs to the RlmJ family. Monomer.

It catalyses the reaction adenosine(2030) in 23S rRNA + S-adenosyl-L-methionine = N(6)-methyladenosine(2030) in 23S rRNA + S-adenosyl-L-homocysteine + H(+). Its function is as follows. Specifically methylates the adenine in position 2030 of 23S rRNA. Nascent 23S rRNA seems to be the natural substrate. Appears to be not necessary for ribosome assembly. Required for the utilization of extracellular DNA as the sole source of carbon and energy. This Escherichia coli (strain K12) protein is Ribosomal RNA large subunit methyltransferase J.